Reading from the N-terminus, the 661-residue chain is UvrABC system protein B (661 aa).

Residues 23–180 (EGLQKGYRIQ…THLARIGYER (158 aa)) form the Helicase ATP-binding domain. 36 to 43 (GVTGSGKT) contributes to the ATP binding site. The Beta-hairpin signature appears at 89 to 112 (YYDYYQPEAYIPTRDLYIEKNADI). Positions 426 to 592 (QIDDLVNEIA…TIIKPLDEEI (167 aa)) constitute a Helicase C-terminal domain. The UVR domain maps to 620–655 (EEYIALLEEEMYKAASELRYEDAARLRDELFNIREK).

It belongs to the UvrB family. As to quaternary structure, forms a heterotetramer with UvrA during the search for lesions. Interacts with UvrC in an incision complex.

It is found in the cytoplasm. The UvrABC repair system catalyzes the recognition and processing of DNA lesions. A damage recognition complex composed of 2 UvrA and 2 UvrB subunits scans DNA for abnormalities. Upon binding of the UvrA(2)B(2) complex to a putative damaged site, the DNA wraps around one UvrB monomer. DNA wrap is dependent on ATP binding by UvrB and probably causes local melting of the DNA helix, facilitating insertion of UvrB beta-hairpin between the DNA strands. Then UvrB probes one DNA strand for the presence of a lesion. If a lesion is found the UvrA subunits dissociate and the UvrB-DNA preincision complex is formed. This complex is subsequently bound by UvrC and the second UvrB is released. If no lesion is found, the DNA wraps around the other UvrB subunit that will check the other stand for damage. The protein is UvrABC system protein B of Thermosipho africanus (strain TCF52B).